Consider the following 58-residue polypeptide: Large ribosomal subunit protein bL32 (58 aa).

It belongs to the bacterial ribosomal protein bL32 family.

This is Large ribosomal subunit protein bL32 from Anaplasma marginale (strain Florida).